A 428-amino-acid chain; its full sequence is Putative gustatory receptor 2a (428 aa).

Residues 1 to 40 (MDTLRALEPLHRACQVCNLWPWRLAPPPDSEGILLRRSRW) lie on the Cytoplasmic side of the membrane. Residues 41 to 61 (LELYGWTVLIAATSFTVYGLF) traverse the membrane as a helical segment. Residues 62-145 (QESSVEEKQD…INMRRQTSRR (84 aa)) lie on the Extracellular side of the membrane. A helical transmembrane segment spans residues 146 to 166 (AVWILWGYAVSQLLILGAKLL). Residues 167–173 (SRGDRFP) lie on the Cytoplasmic side of the membrane. A helical transmembrane segment spans residues 174–194 (IYWISYLLPLLVCGLRYFQIF). Residue asparagine 195 is glycosylated (N-linked (GlcNAc...) asparagine). Residues 195-250 (NATQLVRQRLDVLLVALQQLQLHQKGPAVDTVLEEQEDLEEAAMDRLIAVRLVYQR) are Extracellular-facing. Residues 251–271 (VWALVALLNRCYGLSMLMQVG) form a helical membrane-spanning segment. The Cytoplasmic portion of the chain corresponds to 272–300 (NDFLAITSNCYWMFLNFRQSAASPFDILQ). Residues 301–321 (IVASGVWSAPHLGNVLVLSLL) traverse the membrane as a helical segment. Over 322–349 (CDRTAQCASRLALCLHQVSVDLRNESHN) the chain is Extracellular. Asparagine 345 is a glycosylation site (N-linked (GlcNAc...) asparagine). A helical transmembrane segment spans residues 350-370 (ALVGTLVRYCAPLIILVPLQI). The Cytoplasmic segment spans residues 371–395 (TQFSLQLLHQRLHFSAAGFFNVDCT). A helical transmembrane segment spans residues 396–416 (LLYTIVGATTTYLIILIQFHM). Residues 417 to 428 (SESTIGSDSNGQ) lie on the Extracellular side of the membrane.

Belongs to the insect chemoreceptor superfamily. Gustatory receptor (GR) family. Gr2a subfamily. Expressed in neurons of the terminal external chemosensory organ, the dorsal external chemosensory organ, as well as in the dorsal pharyngeal sense organ of larvae.

It is found in the cell membrane. In terms of biological role, probable gustatory receptor which mediates acceptance or avoidance behavior, depending on its not yet determined substrates. The polypeptide is Putative gustatory receptor 2a (Gr2a) (Drosophila melanogaster (Fruit fly)).